Here is a 1152-residue protein sequence, read N- to C-terminus: P3N-PIPO polyprotein (1152 aa).

One can recognise a Peptidase S30 domain in the interval 292–437; it reads VMNQQTLMAF…HSITHRMVQY (146 aa). Residues His345, Asp354, and Ser388 each act as for P1 proteinase activity in the active site. The short motif at 489–492 is the Involved in interaction with stylet and aphid transmission element; that stretch reads KITC. Positions 747–749 match the Involved in virions binding and aphid transmission motif; sequence PTK. Residues 773 to 895 form the Peptidase C6 domain; the sequence is MFVTKDGYCY…ESEMQHYRVG (123 aa). Active-site for helper component proteinase activity residues include Cys781 and His854.

This sequence belongs to the potyviridae P3N-PIPO polyprotein family. As to quaternary structure, interacts (via PIPO domain) with host PCaP1 protein; this interaction may help to anchor the movement complex to the plasma membrane from which the complex could move to the plasmodesmata. Potyviral RNA is expressed as two polyproteins which undergo post-translational proteolytic processing. Genome polyprotein is processed by NIa-pro, P1 and HC-pro proteinases resulting in the production of at least ten individual proteins. P3N-PIPO is cleaved by P1 and HC-pro proteinases resulting in the production of three individual proteins. The P1 proteinase and the HC-pro cleave only their respective C-termini autocatalytically.

The protein localises to the host cell junction. Its subcellular location is the host plasmodesma. The catalysed reaction is Hydrolyzes a Gly-|-Gly bond at its own C-terminus, commonly in the sequence -Tyr-Xaa-Val-Gly-|-Gly, in the processing of the potyviral polyprotein.. Functionally, required for aphid transmission and also has proteolytic activity. Only cleaves a Gly-Gly dipeptide at its own C-terminus. Interacts with virions and aphid stylets. Acts as a suppressor of RNA-mediated gene silencing, also known as post-transcriptional gene silencing (PTGS), a mechanism of plant viral defense that limits the accumulation of viral RNAs. May have RNA-binding activity. Allows efficient cell to cell propagation, by bypassing the host cell wall barrier. Transports viral genome to neighboring plant cells directly through plasmosdesmata, without any budding. The sequence is that of P3N-PIPO polyprotein from Lettuce mosaic virus (strain 0 / isolate French) (LMV).